The chain runs to 212 residues: Uridine kinase (212 aa).

13–20 (GGSGSGKT) serves as a coordination point for ATP.

It belongs to the uridine kinase family.

The protein localises to the cytoplasm. The enzyme catalyses uridine + ATP = UMP + ADP + H(+). It catalyses the reaction cytidine + ATP = CMP + ADP + H(+). The protein operates within pyrimidine metabolism; CTP biosynthesis via salvage pathway; CTP from cytidine: step 1/3. Its pathway is pyrimidine metabolism; UMP biosynthesis via salvage pathway; UMP from uridine: step 1/1. The polypeptide is Uridine kinase (Bacillus cytotoxicus (strain DSM 22905 / CIP 110041 / 391-98 / NVH 391-98)).